The primary structure comprises 509 residues: DEAD-box ATP-dependent RNA helicase CshA (509 aa).

Positions 2 to 30 (QNFKELGISDKTVQTLEAMGFKEPTPIQK) match the Q motif motif. The Helicase ATP-binding domain maps to 33–203 (IPYALEGDDI…QQFMKAPKII (171 aa)). 46 to 53 (AQTGTGKT) is an ATP binding site. Residues 150–153 (DEAD) carry the DEAD box motif. Positions 214–375 (QIDEYYTIVK…LRPPHRKEVL (162 aa)) constitute a Helicase C-terminal domain. Composition is skewed to basic residues over residues 440 to 459 (ARKN…KRGN) and 467 to 482 (RRSK…KKNQ). The segment at 440-509 (ARKNRSSKGG…KGRTFADHQK (70 aa)) is disordered. Residues 483–492 (KKFDRRDKQQ) show a composition bias toward basic and acidic residues.

Belongs to the DEAD box helicase family. CshA subfamily. As to quaternary structure, oligomerizes, may be a member of the RNA degradosome.

Its subcellular location is the cytoplasm. The enzyme catalyses ATP + H2O = ADP + phosphate + H(+). Functionally, DEAD-box RNA helicase possibly involved in RNA degradation. Unwinds dsRNA in both 5'- and 3'-directions, has RNA-dependent ATPase activity. This chain is DEAD-box ATP-dependent RNA helicase CshA, found in Staphylococcus epidermidis (strain ATCC 12228 / FDA PCI 1200).